Consider the following 673-residue polypeptide: MACLLETPIRMSVLSEVTASSRHYVDRLFDPDPQKVLQGVIDMKNAVIGNNKQKANLIVLGAVPRLLYLLQQETSSTELKTECAVVLGSLAMGTENNVKSLLDCHIIPALLQGLLSPDLKFIEACLRCLRTIFTSPVTPEELLYTDATVIPHLMALLSRSRYTQEYICQIFSHCCKGPDHQTILFNHGAVQNIAHLLTSLSYKVRMQALKCFSVLAFENPQVSMTLVNVLVDGELLPQIFVKMLQRDKPIEMQLTSAKCLTYMCRAGAIRTDDNCIVLKTLPCLVRMCSKERLLEERVEGAETLAYLIEPDVELQRIASITDHLIAMLADYFKYPSSVSAITDIKRLDHDLKHAHELRQAAFKLYASLGANDEDIRKKIIETENMMDRIVTGLSESSVKVRLAAVRCLHSLSRSVQQLRTSFQDHAVWKPLMKVLQNAPDEILVVASSMLCNLLLEFSPSKEPILESGAVELLCGLTQSENPALRVNGIWALMNMAFQAEQKIKADILRSLSTEQLFRLLSDSDLNVLMKTLGLLRNLLSTRPHIDKIMSTHGKQIMQAVTLILEGEHNIEVKEQTLCILANIADGTTAKDLIMTNDDILQKIKYYMGHSHVKLQLAAMFCISNLIWNEEEGSQERQDKLRDMGIVDILHKLSQSPDSNLCDKAKMALQQYLA.

Residue Ala-2 is modified to N-acetylalanine. ARM repeat units follow at residues 51–92, 95–134, 138–176, 178–217, 224–265, 269–309, 313–352, 374–413, 416–455, 458–497, 501–540, 543–585, 588–627, and 634–673; these read NKQK…SLAM, ENNV…TIFT, TPEE…HCCK, PDHQ…VLAF, MTLV…YMCR, IRTD…YLIE, ELQR…HDLK, DIRK…SLSR, QQLR…NLLL, SPSK…NMAF, QKIK…NLLS, PHID…NIAD, TAKD…NLIW, and QERQ…QYLA. Ser-337 bears the Phosphoserine mark. Position 512 is a phosphoserine (Ser-512).

In terms of assembly, identified in the CTLH complex that contains GID4, RANBP9 and/or RANBP10, MKLN1, MAEA, RMND5A (or alternatively its paralog RMND5B), GID8, ARMC8, WDR26 and YPEL5. Within this complex, MAEA, RMND5A (or alternatively its paralog RMND5B), GID8, WDR26, and RANBP9 and/or RANBP10 form the catalytic core, while GID4, MKLN1, ARMC8 and YPEL5 have ancillary roles.

The protein localises to the nucleus. The protein resides in the cytoplasm. Its function is as follows. Component of the CTLH E3 ubiquitin-protein ligase complex that selectively accepts ubiquitin from UBE2H and mediates ubiquitination and subsequent proteasomal degradation of the transcription factor HBP1. This is Armadillo repeat-containing protein 8 (ARMC8) from Homo sapiens (Human).